The chain runs to 288 residues: UPF0761 membrane protein HS_0693 (288 aa).

Transmembrane regions (helical) follow at residues 36–56 (TLALVPLIMVFFSVFAAFPVF), 92–112 (QMSAVGIISLIVVALMLIHSI), 127–147 (PAIFSFAIYWLILTLGPIVIA), 176–196 (LLSLMPFFLTWFIFTVLYMVV), 200–220 (KVSIIHSAAGALIAAVFFTLG), and 240–260 (AMATLPIMLLWIQLSWTAVLL).

Belongs to the UPF0761 family.

It is found in the cell inner membrane. The protein is UPF0761 membrane protein HS_0693 of Histophilus somni (strain 129Pt) (Haemophilus somnus).